The sequence spans 207 residues: Small ribosomal subunit protein uS5 (207 aa).

The tract at residues 1-51 (MTDTPTKQEITSKNDKVPGAIPGEQKKNNRNNDRKRNRRGDSKNLERDSDW) is disordered. Over residues 24 to 51 (EQKKNNRNNDRKRNRRGDSKNLERDSDW) the composition is skewed to basic and acidic residues. The 64-residue stretch at 51-114 (WQERVVQIRR…SDGKKNLVRV (64 aa)) folds into the S5 DRBM domain.

It belongs to the universal ribosomal protein uS5 family. In terms of assembly, part of the 30S ribosomal subunit. Contacts proteins S4 and S8.

Its function is as follows. With S4 and S12 plays an important role in translational accuracy. Located at the back of the 30S subunit body where it stabilizes the conformation of the head with respect to the body. The polypeptide is Small ribosomal subunit protein uS5 (Prochlorococcus marinus (strain MIT 9312)).